The primary structure comprises 450 residues: Folate synthesis bifunctional protein (450 aa).

An HPPK region spans residues 1–166; it reads MTSWNFVCLS…TFAELAAIYP (166 aa). A Pterin-binding domain is found at 180–441; sequence TQIMGIVNIT…QVEGNRRALA (262 aa). The tract at residues 182–450 is DHPS; the sequence is IMGIVNITDN…AAAAWAGMFV (269 aa). N187 is a Mg(2+) binding site. (7,8-dihydropterin-6-yl)methyl diphosphate is bound by residues T227, D267, N287, D358, K395, and 429–431; that span reads RVH.

The protein in the C-terminal section; belongs to the DHPS family. It in the N-terminal section; belongs to the HPPK family. Mg(2+) is required as a cofactor.

It carries out the reaction 6-hydroxymethyl-7,8-dihydropterin + ATP = (7,8-dihydropterin-6-yl)methyl diphosphate + AMP + H(+). It catalyses the reaction (7,8-dihydropterin-6-yl)methyl diphosphate + 4-aminobenzoate = 7,8-dihydropteroate + diphosphate. The protein operates within cofactor biosynthesis; tetrahydrofolate biosynthesis; 2-amino-4-hydroxy-6-hydroxymethyl-7,8-dihydropteridine diphosphate from 7,8-dihydroneopterin triphosphate: step 4/4. It participates in cofactor biosynthesis; tetrahydrofolate biosynthesis; 7,8-dihydrofolate from 2-amino-4-hydroxy-6-hydroxymethyl-7,8-dihydropteridine diphosphate and 4-aminobenzoate: step 1/2. In Chlamydia trachomatis serovar D (strain ATCC VR-885 / DSM 19411 / UW-3/Cx), this protein is Folate synthesis bifunctional protein (folKP).